A 394-amino-acid chain; its full sequence is Elongation factor Tu (394 aa).

The region spanning 10-205 (KPHMNVGTIG…TMDNYFDLPQ (196 aa)) is the tr-type G domain. Residues 19 to 26 (GHVDHGKT) are G1. 19–26 (GHVDHGKT) contacts GTP. Thr-26 serves as a coordination point for Mg(2+). The interval 61–65 (GITIN) is G2. Residues 82–85 (DCPG) are G3. GTP contacts are provided by residues 82-86 (DCPGH) and 137-140 (NKLD). Positions 137-140 (NKLD) are G4. Positions 173–175 (SAF) are G5.

Belongs to the TRAFAC class translation factor GTPase superfamily. Classic translation factor GTPase family. EF-Tu/EF-1A subfamily. In terms of assembly, monomer.

It is found in the cytoplasm. It carries out the reaction GTP + H2O = GDP + phosphate + H(+). Its function is as follows. GTP hydrolase that promotes the GTP-dependent binding of aminoacyl-tRNA to the A-site of ribosomes during protein biosynthesis. The protein is Elongation factor Tu of Borrelia turicatae (strain 91E135).